Consider the following 229-residue polypeptide: PKHD-type hydroxylase Nham_1514 (229 aa).

The region spanning 78–180 (QIFPPLFNRY…RVASFFWLQS (103 aa)) is the Fe2OG dioxygenase domain. Positions 98, 100, and 161 each coordinate Fe cation. Arg-171 is a binding site for 2-oxoglutarate.

It depends on Fe(2+) as a cofactor. The cofactor is L-ascorbate.

In Nitrobacter hamburgensis (strain DSM 10229 / NCIMB 13809 / X14), this protein is PKHD-type hydroxylase Nham_1514.